The primary structure comprises 116 residues: NADH-ubiquinone oxidoreductase chain 3 (116 aa).

Helical transmembrane passes span 3–23 (LITT…TISF), 56–76 (FFLI…LLPL), and 87–107 (LTLI…IYEW).

This sequence belongs to the complex I subunit 3 family.

It localises to the mitochondrion membrane. The enzyme catalyses a ubiquinone + NADH + 5 H(+)(in) = a ubiquinol + NAD(+) + 4 H(+)(out). Functionally, core subunit of the mitochondrial membrane respiratory chain NADH dehydrogenase (Complex I) that is believed to belong to the minimal assembly required for catalysis. Complex I functions in the transfer of electrons from NADH to the respiratory chain. The immediate electron acceptor for the enzyme is believed to be ubiquinone. The polypeptide is NADH-ubiquinone oxidoreductase chain 3 (MT-ND3) (Oncorhynchus mykiss (Rainbow trout)).